Here is a 341-residue protein sequence, read N- to C-terminus: S-adenosylmethionine:tRNA ribosyltransferase-isomerase (341 aa).

Belongs to the QueA family. In terms of assembly, monomer.

It is found in the cytoplasm. It catalyses the reaction 7-aminomethyl-7-carbaguanosine(34) in tRNA + S-adenosyl-L-methionine = epoxyqueuosine(34) in tRNA + adenine + L-methionine + 2 H(+). The protein operates within tRNA modification; tRNA-queuosine biosynthesis. Transfers and isomerizes the ribose moiety from AdoMet to the 7-aminomethyl group of 7-deazaguanine (preQ1-tRNA) to give epoxyqueuosine (oQ-tRNA). In Clostridium botulinum (strain Okra / Type B1), this protein is S-adenosylmethionine:tRNA ribosyltransferase-isomerase.